The chain runs to 543 residues: Limonene hydroxylase (543 aa).

Residues 232–464 (VVTYNPSFEK…LRNVIERAFL (233 aa)) form the Sigma-54 factor interaction domain. Residues 260–267 (GETGSGKE) and 324–333 (ADGGTLFLDE) each bind ATP.

The enzyme catalyses (4S)-limonene + reduced [NADPH--hemoprotein reductase] + O2 = (1S,5R)-carveol + oxidized [NADPH--hemoprotein reductase] + H2O + H(+). It carries out the reaction (4S)-limonene + reduced [NADPH--hemoprotein reductase] + O2 = (4S)-perillyl alcohol + oxidized [NADPH--hemoprotein reductase] + H2O + H(+). It catalyses the reaction perillyl alcohol + NAD(+) = perillyl aldehyde + NADH + H(+). The catalysed reaction is (1S,5R)-carveol + NADP(+) = (R)-carvone + NADPH + H(+). Involved in limonene hydroxylation to a mixture of carveol and perillyl alcohol as well as in dehydrogenation of these products to carvone and perillyl aldehyde. Aromatic alcohols containing an isopropyl or isopropenyl group at ring position 4 also served as substrates for the dehydrogenase activity. The chain is Limonene hydroxylase from Geobacillus stearothermophilus (Bacillus stearothermophilus).